The chain runs to 419 residues: Carboxypeptidase A2 (419 aa).

The first 18 residues, 1-18, serve as a signal peptide directing secretion; the sequence is MAMRLILFFGALFGHIYC. The propeptide at 19–114 is activation peptide; the sequence is LETFVGDQVL…EMLFNRRRER (96 aa). The Peptidase M14 domain occupies 122-414; it reads AYHTLEEISQ…LGLKAIMEHV (293 aa). Positions 179 and 182 each coordinate Zn(2+). Residues 179–182, arginine 237, and 254–255 each bind substrate; these read HARE and NR. Residues cysteine 248 and cysteine 271 are joined by a disulfide bond. Zn(2+) is bound at residue histidine 306. A substrate-binding site is contributed by 307 to 308; it reads SY. Cysteines 320 and 354 form a disulfide. Residue tyrosine 358 participates in substrate binding. Catalysis depends on glutamate 380, which acts as the Proton donor/acceptor.

It belongs to the peptidase M14 family. Zn(2+) serves as cofactor.

Its subcellular location is the secreted. It carries out the reaction Similar to that of carboxypeptidase A (EC 3.4.17.1), but with a preference for bulkier C-terminal residues.. Functionally, carboxypeptidase that catalyzes the release of a C-terminal amino acid, with a preference for large aromatic C-terminal residues. The sequence is that of Carboxypeptidase A2 (CPA2) from Homo sapiens (Human).